The sequence spans 267 residues: 3-methyl-2-oxobutanoate hydroxymethyltransferase (267 aa).

Asp45 and Asp84 together coordinate Mg(2+). 3-methyl-2-oxobutanoate-binding positions include 45 to 46, Asp84, and Lys113; that span reads DS. Glu115 contacts Mg(2+). Catalysis depends on Glu182, which acts as the Proton acceptor.

It belongs to the PanB family. As to quaternary structure, homodecamer; pentamer of dimers. Mg(2+) is required as a cofactor.

It is found in the cytoplasm. It carries out the reaction 3-methyl-2-oxobutanoate + (6R)-5,10-methylene-5,6,7,8-tetrahydrofolate + H2O = 2-dehydropantoate + (6S)-5,6,7,8-tetrahydrofolate. Its pathway is cofactor biosynthesis; coenzyme A biosynthesis. In terms of biological role, catalyzes the reversible reaction in which hydroxymethyl group from 5,10-methylenetetrahydrofolate is transferred onto alpha-ketoisovalerate to form ketopantoate. The polypeptide is 3-methyl-2-oxobutanoate hydroxymethyltransferase (Saccharolobus islandicus (strain L.S.2.15 / Lassen #1) (Sulfolobus islandicus)).